The following is a 171-amino-acid chain: NADH-quinone oxidoreductase subunit I 1 (171 aa).

4Fe-4S ferredoxin-type domains lie at 39-71 (IVLT…LTKA) and 81-110 (EHFR…LTPD). Cys-51, Cys-54, Cys-57, Cys-61, Cys-90, Cys-93, Cys-96, and Cys-100 together coordinate [4Fe-4S] cluster.

This sequence belongs to the complex I 23 kDa subunit family. NDH-1 is composed of 14 different subunits. Subunits NuoA, H, J, K, L, M, N constitute the membrane sector of the complex. [4Fe-4S] cluster serves as cofactor.

The protein localises to the cell inner membrane. It catalyses the reaction a quinone + NADH + 5 H(+)(in) = a quinol + NAD(+) + 4 H(+)(out). In terms of biological role, NDH-1 shuttles electrons from NADH, via FMN and iron-sulfur (Fe-S) centers, to quinones in the respiratory chain. The immediate electron acceptor for the enzyme in this species is believed to be ubiquinone. Couples the redox reaction to proton translocation (for every two electrons transferred, four hydrogen ions are translocated across the cytoplasmic membrane), and thus conserves the redox energy in a proton gradient. The polypeptide is NADH-quinone oxidoreductase subunit I 1 (Rhodopseudomonas palustris (strain BisB5)).